A 489-amino-acid chain; its full sequence is Cytochrome P450 monooxygenase prhB (489 aa).

Helical transmembrane passes span 1 to 21, 212 to 232, and 287 to 307; these read MFSF…KVIY, VIFQ…MIFA, and LFIG…AYLL. N-linked (GlcNAc...) asparagine glycans are attached at residues Asn-347 and Asn-379. Residue Cys-431 coordinates heme.

This sequence belongs to the cytochrome P450 family. Requires heme as cofactor.

The protein resides in the membrane. The protein operates within secondary metabolite biosynthesis; terpenoid biosynthesis. In terms of biological role, cytochrome P450 monooxygenase; part of the gene cluster that mediates the biosynthesis of paraherquonin, a meroterpenoid with a unique, highly congested hexacyclic molecular architecture. The first step of the pathway is the synthesis of 3,5-dimethylorsellinic acid (DMOA) by the polyketide synthase prhL. Synthesis of DMOA is followed by farnesylation by the prenyltransferase prhE, methylesterification by the methyl-transferase prhM, epoxidation of the prenyl chain by the flavin-dependent monooxygenase prhF, and cyclization of the farnesyl moiety by the terpene cyclase prhH, to yield the tetracyclic intermediate, protoaustinoid A. The short chain dehydrogenase prhI then oxidizes the C-3 alcohol group of the terpene cyclase product to transform protoaustinoid A into protoaustinoid B. The FAD-binding monooxygenase prhJ catalyzes the oxidation of protoaustinoid B into preaustinoid A which is further oxidized into preaustinoid A1 by FAD-binding monooxygenase phrK. Finally, prhA leads to berkeleydione via the berkeleyone B intermediate. PrhA is a multifunctional dioxygenase that first desaturates at C5-C6 to form berkeleyone B, followed by rearrangement of the A/B-ring to form the cycloheptadiene moiety in berkeleydione. Berkeleydione serves as the key intermediate for the biosynthesis of paraherquonin as well as many other meroterpenoids. The cytochrome P450 monooxygenases prhB, prhD, and prhN, as well as the isomerase prhC, are probably involved in the late stage of paraherquonin biosynthesis, after the production of berkeleydione. Especially prhC might be a multifunctional enzyme that catalyzes the D-ring expansion via intramolecular methoxy rearrangement, as well as the hydrolysis of the expanded D-ring. This chain is Cytochrome P450 monooxygenase prhB, found in Penicillium brasilianum.